The primary structure comprises 149 residues: Calmodulin-1 (149 aa).

Alanine 2 is modified (N-acetylalanine). 4 consecutive EF-hand domains span residues 8–43 (DQIS…LGQN), 44–79 (PTEA…KMKD), 81–116 (DSEE…LGEK), and 117–149 (LTDE…MMAK). Residues aspartate 21, aspartate 23, aspartate 25, cysteine 27, glutamate 32, aspartate 57, aspartate 59, asparagine 61, threonine 63, glutamate 68, aspartate 94, aspartate 96, asparagine 98, and glutamate 105 each contribute to the Ca(2+) site. N6,N6,N6-trimethyllysine is present on lysine 116. The Ca(2+) site is built by aspartate 130, aspartate 132, aspartate 134, glutamine 136, and glutamate 141.

It belongs to the calmodulin family.

Calmodulin mediates the control of a large number of enzymes, ion channels and other proteins by Ca(2+). Among the enzymes to be stimulated by the calmodulin-Ca(2+) complex are a number of protein kinases and phosphatases. The sequence is that of Calmodulin-1 (CAM81) from Petunia hybrida (Petunia).